A 458-amino-acid chain; its full sequence is O-acyltransferase WSD (458 aa).

His-133 functions as the Proton acceptor in the catalytic mechanism.

It belongs to the long-chain O-acyltransferase family.

The catalysed reaction is a long chain fatty alcohol + a fatty acyl-CoA = a wax ester + CoA. It catalyses the reaction an acyl-CoA + a 1,2-diacyl-sn-glycerol = a triacyl-sn-glycerol + CoA. The protein operates within glycerolipid metabolism; triacylglycerol biosynthesis. Functionally, bifunctional wax ester synthase/diacylglycerol acyltransferase (WS and DGAT). Catalyzes the terminal and only committed step in triacylglycerol synthesis by using diacylglycerol and fatty acyl CoA as substrates. Required for storage lipid synthesis. WS uses C(12)-CoA to C(18)-CoA substrates whereas DGAT prefers C(20)-CoA. Upon expression in E.coli and Pseudomonas citronellolis (DSM 50332) both WS and DGAT activities increase. The chain is O-acyltransferase WSD (wax-dgaT) from Acinetobacter baylyi (strain ATCC 33305 / BD413 / ADP1).